The chain runs to 349 residues: tRNA pseudouridine synthase D (349 aa).

Phe27 serves as a coordination point for substrate. The active-site Nucleophile is the Asp80. A substrate-binding site is contributed by Asn129. One can recognise a TRUD domain in the interval 155–303; sequence GVPNYFGAQR…VEAARRAMLL (149 aa). Phe329 is a binding site for substrate.

The protein belongs to the pseudouridine synthase TruD family.

The enzyme catalyses uridine(13) in tRNA = pseudouridine(13) in tRNA. In terms of biological role, responsible for synthesis of pseudouridine from uracil-13 in transfer RNAs. This Escherichia coli (strain SMS-3-5 / SECEC) protein is tRNA pseudouridine synthase D.